Reading from the N-terminus, the 389-residue chain is MSEYLFTSESVSEGHPDKVADQVSDAILDAILAQDPKARVAAETLVNTGLCVLAGEITTTAQVDYIKVARETIKRIGYNSSELGFDANGCAVGVYYDQQSPDIAQGVNEGEGIDLNQGAGDQGLMFGYACDETPTLMPFAIYYSHRLMQRQSELRKDGRLPWLRPDAKAQLTVVYDSETGKVKRIDTVVLSTQHDPSVGYEELKNAVIEQIIKPVLPSELLTDETKYLINPTGRFVIGGPQGDCGLTGRKIIVDTYGGAAPHGGGAFSGKDPSKVDRSAAYACRYVAKNIVAAGLATQCQIQVSYAIGVAEPTSISIDTFGTGKISEEKLITLVREHFDLRPKGIVQMLDLLRPIYSKSAAYGHFGREEPEFTWERTDKAAALRAAAGL.

Residue His15 participates in ATP binding. Asp17 contacts Mg(2+). A K(+)-binding site is contributed by Glu43. Residues Glu56 and Gln99 each contribute to the L-methionine site. Positions 99–109 (QSPDIAQGVNE) are flexible loop. ATP contacts are provided by residues 166–168 (DAK), 234–235 (RF), Asp243, 249–250 (RK), Ala266, and Lys270. Residue Asp243 participates in L-methionine binding. Lys274 serves as a coordination point for L-methionine.

Belongs to the AdoMet synthase family. In terms of assembly, homotetramer; dimer of dimers. Mg(2+) is required as a cofactor. K(+) serves as cofactor.

Its subcellular location is the cytoplasm. It carries out the reaction L-methionine + ATP + H2O = S-adenosyl-L-methionine + phosphate + diphosphate. It participates in amino-acid biosynthesis; S-adenosyl-L-methionine biosynthesis; S-adenosyl-L-methionine from L-methionine: step 1/1. In terms of biological role, catalyzes the formation of S-adenosylmethionine (AdoMet) from methionine and ATP. The overall synthetic reaction is composed of two sequential steps, AdoMet formation and the subsequent tripolyphosphate hydrolysis which occurs prior to release of AdoMet from the enzyme. This chain is S-adenosylmethionine synthase, found in Neisseria meningitidis serogroup A / serotype 4A (strain DSM 15465 / Z2491).